Reading from the N-terminus, the 205-residue chain is Ribonuclease HII (205 aa).

The region spanning 14–205 is the RNase H type-2 domain; that stretch reads ERICGIDEAG…SFKVRRLNEA (192 aa). A divalent metal cation is bound by residues aspartate 20, glutamate 21, and aspartate 117.

The protein belongs to the RNase HII family. Requires Mn(2+) as cofactor. The cofactor is Mg(2+).

The protein localises to the cytoplasm. It catalyses the reaction Endonucleolytic cleavage to 5'-phosphomonoester.. Its function is as follows. Endonuclease that specifically degrades the RNA of RNA-DNA hybrids. This is Ribonuclease HII from Chlorobium phaeovibrioides (strain DSM 265 / 1930) (Prosthecochloris vibrioformis (strain DSM 265)).